We begin with the raw amino-acid sequence, 320 residues long: Beta-ketoacyl-[acyl-carrier-protein] synthase III (320 aa).

Active-site residues include Cys112 and His245. The ACP-binding stretch occupies residues 246–250; sequence QANIR. The active site involves Asn275.

This sequence belongs to the thiolase-like superfamily. FabH family. As to quaternary structure, homodimer.

The protein resides in the cytoplasm. The enzyme catalyses malonyl-[ACP] + acetyl-CoA + H(+) = 3-oxobutanoyl-[ACP] + CO2 + CoA. Its pathway is lipid metabolism; fatty acid biosynthesis. In terms of biological role, catalyzes the condensation reaction of fatty acid synthesis by the addition to an acyl acceptor of two carbons from malonyl-ACP. Catalyzes the first condensation reaction which initiates fatty acid synthesis and may therefore play a role in governing the total rate of fatty acid production. Possesses both acetoacetyl-ACP synthase and acetyl transacylase activities. Its substrate specificity determines the biosynthesis of branched-chain and/or straight-chain of fatty acids. The sequence is that of Beta-ketoacyl-[acyl-carrier-protein] synthase III from Streptococcus thermophilus (strain CNRZ 1066).